The sequence spans 194 residues: Peptidyl-tRNA hydrolase (194 aa).

Tyr-16 serves as a coordination point for tRNA. His-21 (proton acceptor) is an active-site residue. TRNA-binding residues include Phe-67, Asn-69, and Asn-115.

The protein belongs to the PTH family. In terms of assembly, monomer.

Its subcellular location is the cytoplasm. The enzyme catalyses an N-acyl-L-alpha-aminoacyl-tRNA + H2O = an N-acyl-L-amino acid + a tRNA + H(+). In terms of biological role, hydrolyzes ribosome-free peptidyl-tRNAs (with 1 or more amino acids incorporated), which drop off the ribosome during protein synthesis, or as a result of ribosome stalling. Catalyzes the release of premature peptidyl moieties from peptidyl-tRNA molecules trapped in stalled 50S ribosomal subunits, and thus maintains levels of free tRNAs and 50S ribosomes. The sequence is that of Peptidyl-tRNA hydrolase from Escherichia fergusonii (strain ATCC 35469 / DSM 13698 / CCUG 18766 / IAM 14443 / JCM 21226 / LMG 7866 / NBRC 102419 / NCTC 12128 / CDC 0568-73).